Here is a 438-residue protein sequence, read N- to C-terminus: Aspartate--tRNA(Asp/Asn) ligase (438 aa).

E176 contacts L-aspartate. The interval 198 to 201 is aspartate; the sequence is QLYK. R220 provides a ligand contact to L-aspartate. ATP contacts are provided by residues 220–222, 228–230, and E361; these read RAE and RHL. Mg(2+)-binding residues include E361 and S364. Residues S364 and R368 each coordinate L-aspartate. Residue 409-412 coordinates ATP; sequence GADR.

Belongs to the class-II aminoacyl-tRNA synthetase family. Type 2 subfamily. In terms of assembly, homodimer. It depends on Mg(2+) as a cofactor.

The protein resides in the cytoplasm. It catalyses the reaction tRNA(Asx) + L-aspartate + ATP = L-aspartyl-tRNA(Asx) + AMP + diphosphate. Its function is as follows. Aspartyl-tRNA synthetase with relaxed tRNA specificity since it is able to aspartylate not only its cognate tRNA(Asp) but also tRNA(Asn). Reaction proceeds in two steps: L-aspartate is first activated by ATP to form Asp-AMP and then transferred to the acceptor end of tRNA(Asp/Asn). This is Aspartate--tRNA(Asp/Asn) ligase from Methanococcus maripaludis (strain C7 / ATCC BAA-1331).